A 316-amino-acid polypeptide reads, in one-letter code: Biotin synthase (316 aa).

Residues 36–264 (TEIQISTLLS…ASRVRLAAGR (229 aa)) form the Radical SAM core domain. [4Fe-4S] cluster is bound by residues Cys-51, Cys-55, and Cys-58. [2Fe-2S] cluster is bound by residues Cys-96, Cys-127, Cys-187, and Arg-259.

It belongs to the radical SAM superfamily. Biotin synthase family. In terms of assembly, homodimer. The cofactor is [4Fe-4S] cluster. Requires [2Fe-2S] cluster as cofactor.

The enzyme catalyses (4R,5S)-dethiobiotin + (sulfur carrier)-SH + 2 reduced [2Fe-2S]-[ferredoxin] + 2 S-adenosyl-L-methionine = (sulfur carrier)-H + biotin + 2 5'-deoxyadenosine + 2 L-methionine + 2 oxidized [2Fe-2S]-[ferredoxin]. Its pathway is cofactor biosynthesis; biotin biosynthesis; biotin from 7,8-diaminononanoate: step 2/2. Its function is as follows. Catalyzes the conversion of dethiobiotin (DTB) to biotin by the insertion of a sulfur atom into dethiobiotin via a radical-based mechanism. In Gluconacetobacter diazotrophicus (strain ATCC 49037 / DSM 5601 / CCUG 37298 / CIP 103539 / LMG 7603 / PAl5), this protein is Biotin synthase.